We begin with the raw amino-acid sequence, 283 residues long: MSHELLRQPKWRVIDQSHFGPLFDAKQSFAIDDALCTAVGAGQSDAVVRTWVHENTVVLGAADTKLPYIDEAISFLRQEGYRVVVRNSGGLAVVLDSGVLNISLIFPETKNTIAIEQGYEAMYALMAAMLASYGARVEAGEIVGSYCPGSYDLSIGGKKFAGISQRRVRGGVAVQIYLCVNGSGAARAELIRRFYELGRQGEKTKFAYPDVVPTVMASLSELLGCELSIDELLVALWRTLQSFGGELYSSALENGEWNWYEQYWARIVERNETALKGELLAGE.

A BPL/LPL catalytic domain is found at 42–248; it reads GQSDAVVRTW…TLQSFGGELY (207 aa). The active-site Acyl-thioester intermediate is C147.

The protein belongs to the octanoyltransferase LipL family.

It catalyses the reaction N(6)-octanoyl-L-lysyl-[glycine-cleavage complex H protein] + L-lysyl-[lipoyl-carrier protein] = N(6)-octanoyl-L-lysyl-[lipoyl-carrier protein] + L-lysyl-[glycine-cleavage complex H protein]. It functions in the pathway protein modification; protein lipoylation via endogenous pathway; protein N(6)-(lipoyl)lysine from octanoyl-[acyl-carrier-protein]. Functionally, catalyzes the amidotransfer (transamidation) of the octanoyl moiety from octanoyl-GcvH to the lipoyl domain of the E2 subunit of lipoate-dependent enzymes. The polypeptide is Octanoyl-[GcvH]:protein N-octanoyltransferase (Geobacillus kaustophilus (strain HTA426)).